The sequence spans 97 residues: Co-chaperonin GroES (97 aa).

It belongs to the GroES chaperonin family. Heptamer of 7 subunits arranged in a ring. Interacts with the chaperonin GroEL.

Its subcellular location is the cytoplasm. In terms of biological role, together with the chaperonin GroEL, plays an essential role in assisting protein folding. The GroEL-GroES system forms a nano-cage that allows encapsulation of the non-native substrate proteins and provides a physical environment optimized to promote and accelerate protein folding. GroES binds to the apical surface of the GroEL ring, thereby capping the opening of the GroEL channel. In Pseudomonas fluorescens (strain ATCC BAA-477 / NRRL B-23932 / Pf-5), this protein is Co-chaperonin GroES.